Here is a 1080-residue protein sequence, read N- to C-terminus: Serine/threonine-protein kinase KIC1 (1080 aa).

A Protein kinase domain is found at 23 to 276 (FKRTEVIGRG…ADDLLKSKFI (254 aa)). ATP-binding positions include 29–37 (IGRGKFGVV) and Lys-52. Catalysis depends on Asp-144, which acts as the Proton acceptor. 4 disordered regions span residues 308–347 (EGSI…EIKR), 615–760 (KARS…LAPP), 787–831 (STLN…LQMP), and 901–956 (SQSI…NTGN). Over residues 312–326 (PENEPSKPSEAPKPS) the composition is skewed to low complexity. Residues 615-626 (KARSSTVTAGTP) show a composition bias toward polar residues. Residues 627–638 (SSSSSIQYKSPS) are compositionally biased toward low complexity. A compositionally biased stretch (polar residues) spans 656–673 (STITNQKLGSAVASNSGI). Positions 674 to 689 (SSTPNNSNNYNNNTDS) are enriched in low complexity. Over residues 693–726 (RGSSGSNTANSTQMGITNPGNVTKLSTHKASSPS) the composition is skewed to polar residues. Ser-735 is subject to Phosphoserine. Over residues 743–756 (SPTQNIGHNSTHTN) the composition is skewed to polar residues. Residues 787–807 (STLNTISGNSSNNLTSSNYFS) show a composition bias toward low complexity. Residues 808–821 (NEKEGSRVNGDFKR) are compositionally biased toward basic and acidic residues. The segment covering 901–913 (SQSISNRKNSSAS) has biased composition (polar residues). Low complexity predominate over residues 918-956 (NILGSSVSGNVSGIGNNNVGSNNNSGPNNSVPLSANTGN).

It belongs to the protein kinase superfamily. Ser/Thr protein kinase family. As to quaternary structure, interacts with CDC31.

The enzyme catalyses L-seryl-[protein] + ATP = O-phospho-L-seryl-[protein] + ADP + H(+). It carries out the reaction L-threonyl-[protein] + ATP = O-phospho-L-threonyl-[protein] + ADP + H(+). Functionally, protein kinase involved in morphogenesis and cell integrity. This Saccharomyces cerevisiae (strain ATCC 204508 / S288c) (Baker's yeast) protein is Serine/threonine-protein kinase KIC1 (KIC1).